A 165-amino-acid chain; its full sequence is Xanthine-guanine phosphoribosyltransferase (165 aa).

Residues 41–42 (RG) and 98–106 (DDLTDTGKT) contribute to the 5-phospho-alpha-D-ribose 1-diphosphate site. Aspartate 99 serves as a coordination point for Mg(2+). Residues aspartate 102 and isoleucine 145 each coordinate guanine. Xanthine-binding residues include aspartate 102 and isoleucine 145. GMP contacts are provided by residues 102 to 106 (DTGKT) and 144 to 145 (WI).

The protein belongs to the purine/pyrimidine phosphoribosyltransferase family. XGPT subfamily. As to quaternary structure, homotetramer. Mg(2+) is required as a cofactor.

The protein resides in the cell inner membrane. It catalyses the reaction GMP + diphosphate = guanine + 5-phospho-alpha-D-ribose 1-diphosphate. The enzyme catalyses XMP + diphosphate = xanthine + 5-phospho-alpha-D-ribose 1-diphosphate. It carries out the reaction IMP + diphosphate = hypoxanthine + 5-phospho-alpha-D-ribose 1-diphosphate. It participates in purine metabolism; GMP biosynthesis via salvage pathway; GMP from guanine: step 1/1. It functions in the pathway purine metabolism; XMP biosynthesis via salvage pathway; XMP from xanthine: step 1/1. Functionally, purine salvage pathway enzyme that catalyzes the transfer of the ribosyl-5-phosphate group from 5-phospho-alpha-D-ribose 1-diphosphate (PRPP) to the N9 position of the 6-oxopurines guanine and xanthine to form the corresponding ribonucleotides GMP (guanosine 5'-monophosphate) and XMP (xanthosine 5'-monophosphate), with the release of PPi. To a lesser extent, also acts on hypoxanthine. The protein is Xanthine-guanine phosphoribosyltransferase of Brucella suis (strain ATCC 23445 / NCTC 10510).